Reading from the N-terminus, the 295-residue chain is Proline-rich proteoglycan 2 (295 aa).

An N-terminal signal peptide occupies residues 1–16; that stretch reads MLVVLLTAALLVLSSA. Positions 16–295 are disordered; the sequence is AQGVDEEVVY…QSSFLWSFSA (280 aa). Over residues 26–41 the composition is skewed to low complexity; that stretch reads EDSSQQLELEQQSQGH. Pro residues predominate over residues 48 to 58; it reads PPPGGLPPRPP. The segment covering 62–78 has biased composition (acidic residues); it reads ENGDGDDNDDGDDDGSG. Composition is skewed to pro residues over residues 100–187 and 194–278; these read PPPA…PPGG and QGPP…PQGP.

Post-translationally, contains glycosaminoglycans of chondroitin-sulfate and heparan types.

The protein resides in the secreted. In Rattus norvegicus (Rat), this protein is Proline-rich proteoglycan 2 (Prpg2).